The following is a 186-amino-acid chain: Large ribosomal subunit protein uL22 (186 aa).

At Ser158 the chain carries Phosphoserine. Positions Lys159–Glu186 are disordered. Thr161 bears the Phosphothreonine mark. The segment covering Arg177–Glu186 has biased composition (basic and acidic residues).

It belongs to the universal ribosomal protein uL22 family.

The protein is Large ribosomal subunit protein uL22 (RpL17) of Drosophila melanogaster (Fruit fly).